A 1556-amino-acid polypeptide reads, in one-letter code: Bromodomain adjacent to zinc finger domain protein 1A (1556 aa).

The required for interaction with the CHRAC1-POLE3 heterodimer. Required for interaction with the CHRAC1-POLE3 heterodimer stretch occupies residues 1–128; sequence MPLLHRKPFV…EETVEVIRNN (128 aa). The interval 1–133 is required for interaction with NCOR1; it reads MPLLHRKPFV…VIRNNGARLQ (133 aa). Residues 22–128 enclose the WAC domain; that stretch reads EEVFYCKVTN…EETVEVIRNN (107 aa). Residue serine 270 is modified to Phosphoserine. Residues 306–397 adopt a coiled-coil conformation; sequence KERDKLLKQE…YVEYLKQWSK (92 aa). A DDT domain is found at 422-487; that stretch reads PEIFGDALMV…LTAIFQAIAE (66 aa). The stretch at 634 to 709 forms a coiled coil; the sequence is IEDYVDILRQ…DISIGEEERE (76 aa). Basic and acidic residues predominate over residues 662 to 695; it reads EAAARIRKRKEEKLKEQEQKMKEKQEKLKEDEQR. Disordered regions lie at residues 662-754, 841-877, and 941-966; these read EAAA…NGFK, PSSFQNNVQSQDPQVSTKTGEPLMSESTSNIDQGPRD, and FHFSDKPQPDSKPTYSRGRSSNAYDP. Residues 667-933 form a required for interaction with SMARCA5 and formation of the CHRAC ISWI chromatin remodeling complex region; that stretch reads IRKRKEEKLK…QEKSRICAQL (267 aa). The residue at position 702 (serine 702) is a Phosphoserine. Residues 703 to 713 are compositionally biased toward acidic residues; it reads IGEEEREDFDT. The span at 715–726 shows a compositional bias: basic and acidic residues; the sequence is IESKDTEQKELD. Residues 727 to 736 show a composition bias toward acidic residues; sequence QDMVTEDEDD. At threonine 731 the chain carries Phosphothreonine. 2 stretches are compositionally biased toward polar residues: residues 842–872 and 951–965; these read SSFQNNVQSQDPQVSTKTGEPLMSESTSNID and SKPTYSRGRSSNAYD. Lysine 952 is covalently cross-linked (Glycyl lysine isopeptide (Lys-Gly) (interchain with G-Cter in SUMO2)). Phosphoserine occurs at positions 960 and 961. A PHD-type zinc finger spans residues 1148–1198; the sequence is NARCKICRKKGDAENMVLCDGCDRGHHTYCVRPKLKTVPEGDWFCPECRPK. 2 disordered regions span residues 1202–1376 and 1399–1431; these read RRLS…NFPN and LQESESKRRCRKRQSPEPSPVTLGRRSSGRQGG. Over residues 1213-1258 the composition is skewed to acidic residues; it reads ESDEDVEDSMGGEDDEVDGDEEEGQSEEEEYEVEQDEDDSQEEEEV. The segment covering 1262–1276 has biased composition (basic residues); the sequence is KRGRPQVRLPVKTRG. Residues 1277-1312 show a composition bias toward polar residues; sequence KLSSSFSSRGQQQEPGRYPSRSQQSTPKTTVSSKTG. Residues serine 1281, serine 1320, serine 1339, serine 1353, serine 1363, serine 1371, serine 1402, serine 1413, and serine 1417 each carry the phosphoserine modification. A compositionally biased stretch (polar residues) spans 1363–1374; it reads SANNTPENSPNF. In terms of domain architecture, Bromo spans 1430–1533; it reads GGVHELSAFE…AFFHIQAQKL (104 aa). A Phosphothreonine modification is found at threonine 1547.

It belongs to the WAL family. Component of the ACF-1 ISWI chromatin remodeling complex at least composed of SMARCA1 and BAZ1A, which regulates the spacing of histone octamers on the DNA template to facilitate access to DNA. Within the ACF-1 ISWI chromatin remodeling complex interacts with SMARCA1; the interaction is direct. Component of the ACF-5 ISWI chromatin remodeling complex (also called the ACF complex) at least composed of BAZ1A and SMARCA5/SNF2H, which regulates the spacing of histone octamers on the DNA template to facilitate access to DNA. Within the ACF-5 ISWI chromatin remodeling complex interacts with SMARCA5/SNF2H; the interaction is direct. Component of the CHRAC ISWI chromatin remodeling complex at least composed of SMARCA5/SNF2H, BAZ1A/ACF1, CHRAC1 and POLE3; the complex preferentially binds DNA through the CHRAC1-POLE3 heterodimer and possesses ATP-dependent nucleosome-remodeling activity. Within the complex interacts (via N-terminus) with POLE3-CHRAC1 heterodimer; the interaction is direct and is required for the complex to preferentially bind to DNA. Within the complex interacts with SMARCA5/SNF2H; the interaction is direct and promotes the interaction with the POLE3-CHRAC1 heterodimer. Interacts with NCOR1 (via its RD1 domain); the interaction corepresses a number of NCOR1-regulated genes. As to expression, highly expressed in testis and at low or undetectable levels in other tissues analyzed.

Its subcellular location is the nucleus. In terms of biological role, regulatory subunit of the ATP-dependent ACF-1 and ACF-5 ISWI chromatin remodeling complexes, which form ordered nucleosome arrays on chromatin and slide edge- and center-positioned histone octamers away from their original location on the DNA template to facilitate access to DNA during DNA-templated processes such as DNA replication, transcription, and repair. Both complexes regulate the spacing of nucleosomes along the chromatin and have the ability to slide mononucleosomes to the center of a DNA template in an ATP-dependent manner. The ACF-1 ISWI chromatin remodeling complex has a lower ATP hydrolysis rate than the ACF-5 ISWI chromatin remodeling complex. Has a role in sensing the length of DNA which flank nucleosomes, which modulates the nucleosome spacing activity of the ACF-5 ISWI chromatin remodeling complex. Involved in DNA replication and together with SMARCA5/SNF2H is required for replication of pericentric heterochromatin in S-phase. May have a role in nuclear receptor-mediated transcription repression. In Homo sapiens (Human), this protein is Bromodomain adjacent to zinc finger domain protein 1A (BAZ1A).